A 105-amino-acid chain; its full sequence is uncharacterized protein (105 aa).

It to C.jejuni CJ1463.

This is an uncharacterized protein from Helicobacter pylori (strain ATCC 700392 / 26695) (Campylobacter pylori).